The primary structure comprises 856 residues: Protein phosphatase 2C 32 (856 aa).

Residues Ser152, Ser189, and Ser201 each carry the phosphoserine modification. In terms of domain architecture, PPM-type phosphatase spans 269–835 (ESCLESNRNL…DDVSVMVVSL (567 aa)). The Mn(2+) site is built by Asp307 and Gly308. 3 disordered regions span residues 340 to 373 (PSED…KSVV), 388 to 407 (GNTD…GPGK), and 446 to 485 (NPST…QISS). Positions 395-407 (ADGPPGDSAGPGK) are enriched in low complexity. The span at 471–485 (NSGQRHGTKKSQISS) shows a compositional bias: polar residues. Residues Asp763 and Asp826 each coordinate Mn(2+).

This sequence belongs to the PP2C family. The cofactor is Mg(2+). Requires Mn(2+) as cofactor. In terms of tissue distribution, expressed in roots, leaves, stems, inflorescences, flowers and throughout the shoot meristem.

The protein localises to the nucleus. It carries out the reaction O-phospho-L-seryl-[protein] + H2O = L-seryl-[protein] + phosphate. The catalysed reaction is O-phospho-L-threonyl-[protein] + H2O = L-threonyl-[protein] + phosphate. Its activity is regulated as follows. Insensitive to okadaic acid. In terms of biological role, involved in the regulation of pedicel length and of CLAVATA pathways controlling stem cell identity at shoot and flower meristems. The sequence is that of Protein phosphatase 2C 32 (POL) from Arabidopsis thaliana (Mouse-ear cress).